A 555-amino-acid polypeptide reads, in one-letter code: CTL-like protein DDB_G0274487 (555 aa).

The span at 1 to 17 (MGIEDNSQQPNTGSPYG) shows a compositional bias: polar residues. Positions 1-101 (MGIEDNSQQP…NLNKANDRES (101 aa)) are disordered. Low complexity predominate over residues 19–63 (SPPSQYNPYGQQPPQQQQYNPYGEQQQQPQQQQQYGYQPQFQPTY). Residues 79-90 (PFPPQQQQPPPI) are compositionally biased toward pro residues. An N-linked (GlcNAc...) asparagine glycan is attached at asparagine 116. A helical transmembrane segment spans residues 138-158 (IWFSILFGLNFGLLIVVSASA). A glycan (N-linked (GlcNAc...) asparagine) is linked at asparagine 174. Transmembrane regions (helical) follow at residues 182-202 (FLFA…WAWL), 210-230 (ESLI…YCVF), 231-251 (FFVW…FFII), 284-304 (AGYV…SAFA), 313-333 (AIQT…FHVI), 340-360 (TVSG…VGMP), 372-392 (LTTS…IETL), 405-425 (VVVK…SSIV), 472-492 (IAIG…LISI), and 493-513 (PFDM…LVII).

It belongs to the CTL (choline transporter-like) family.

It is found in the membrane. This is CTL-like protein DDB_G0274487 from Dictyostelium discoideum (Social amoeba).